Here is a 72-residue protein sequence, read N- to C-terminus: Large ribosomal subunit protein bL31 (72 aa).

4 residues coordinate Zn(2+): C16, C18, C37, and C40.

This sequence belongs to the bacterial ribosomal protein bL31 family. Type A subfamily. In terms of assembly, part of the 50S ribosomal subunit. Zn(2+) serves as cofactor.

In terms of biological role, binds the 23S rRNA. The polypeptide is Large ribosomal subunit protein bL31 (Buchnera aphidicola subsp. Acyrthosiphon pisum (strain Tuc7)).